The primary structure comprises 102 residues: Large ribosomal subunit protein bL21 (102 aa).

This sequence belongs to the bacterial ribosomal protein bL21 family. In terms of assembly, part of the 50S ribosomal subunit. Contacts protein L20.

In terms of biological role, this protein binds to 23S rRNA in the presence of protein L20. The sequence is that of Large ribosomal subunit protein bL21 from Lawsonia intracellularis.